The following is a 57-amino-acid chain: MTILKWALIFLVISVVAGIFGFTGVSAASADLARILFYIFAAIFIVLLILGFTIFRA.

2 helical membrane passes run W6–S26 and I35–F55.

The protein belongs to the UPF0391 family.

Its subcellular location is the cell membrane. This chain is UPF0391 membrane protein RPD_2934, found in Rhodopseudomonas palustris (strain BisB5).